A 256-amino-acid chain; its full sequence is Hydroxyacylglutathione hydrolase (256 aa).

Zn(2+)-binding residues include His56, His58, Asp60, His61, His114, Asp133, and His171.

It belongs to the metallo-beta-lactamase superfamily. Glyoxalase II family. Monomer. Requires Zn(2+) as cofactor.

The catalysed reaction is an S-(2-hydroxyacyl)glutathione + H2O = a 2-hydroxy carboxylate + glutathione + H(+). It participates in secondary metabolite metabolism; methylglyoxal degradation; (R)-lactate from methylglyoxal: step 2/2. Functionally, thiolesterase that catalyzes the hydrolysis of S-D-lactoyl-glutathione to form glutathione and D-lactic acid. The chain is Hydroxyacylglutathione hydrolase from Rhodobacter capsulatus (Rhodopseudomonas capsulata).